We begin with the raw amino-acid sequence, 278 residues long: HTH-type transcriptional regulator TsaQ1/TsaQ2 (278 aa).

Positions 19 to 80 (VHSLAKGLEI…PRSRKLAMGA (62 aa)) constitute an HTH iclR-type domain. A DNA-binding region (H-T-H motif) is located at residues 40-59 (NQQLVELTGLPKATVSRLTS). Residues 95–266 (LQRIARPHME…VQDIQAEMRA (172 aa)) form the IclR-ED domain.

In terms of biological role, both copies function as additional regulators for the tsa locus, specifically for tsaT. In Comamonas testosteroni (Pseudomonas testosteroni), this protein is HTH-type transcriptional regulator TsaQ1/TsaQ2 (tsaQ1).